The sequence spans 420 residues: Histidine--tRNA ligase (420 aa).

The protein belongs to the class-II aminoacyl-tRNA synthetase family. In terms of assembly, homodimer.

The protein localises to the cytoplasm. The enzyme catalyses tRNA(His) + L-histidine + ATP = L-histidyl-tRNA(His) + AMP + diphosphate + H(+). The protein is Histidine--tRNA ligase of Mycobacterium marinum (strain ATCC BAA-535 / M).